The following is a 473-amino-acid chain: P3 protein (473 aa).

9 helical membrane passes run 25-45 (FVGM…AQVM), 221-241 (PMLL…FLMA), 249-269 (ALAL…SYLF), 277-297 (VTLA…FLPL), 316-336 (ISKI…GVVI), 356-376 (FILL…ILVG), 381-401 (IVLV…SLAI), 413-433 (VSIE…QLSL), and 446-466 (FIVA…QFIY).

Belongs to the bile acid:sodium symporter (BASS) (TC 2.A.28) family.

It is found in the membrane. Its function is as follows. The ubiquitous expression and the conservation of the sequence in distant animal species suggest that the gene codes for a protein with housekeeping functions. The polypeptide is P3 protein (Slc10a3) (Mus musculus (Mouse)).